Reading from the N-terminus, the 111-residue chain is High mobility group protein Z (111 aa).

The segment at residues 6 to 72 is a DNA-binding region (HMG box); the sequence is PKRPLSAYML…EYNKAVKEYE (67 aa). Residue Ser-11 is modified to Phosphoserine. A disordered region spans residues 72-111; that stretch reads EANGGTDSGAPKKRKKAAAKPAKKAKKKESSEEEEEDESE. Positions 82-98 are enriched in basic residues; sequence PKKRKKAAAKPAKKAKK. The span at 102–111 shows a compositional bias: acidic residues; the sequence is SEEEEEDESE.

Belongs to the HMGB family.

It localises to the nucleus. The protein localises to the chromosome. This Drosophila melanogaster (Fruit fly) protein is High mobility group protein Z (HmgZ).